The sequence spans 485 residues: UDP-N-acetylmuramate--L-alanine ligase (485 aa).

An ATP-binding site is contributed by 129–135; sequence GTHGKTT.

Belongs to the MurCDEF family.

The protein localises to the cytoplasm. It carries out the reaction UDP-N-acetyl-alpha-D-muramate + L-alanine + ATP = UDP-N-acetyl-alpha-D-muramoyl-L-alanine + ADP + phosphate + H(+). It functions in the pathway cell wall biogenesis; peptidoglycan biosynthesis. Cell wall formation. This Vibrio campbellii (strain ATCC BAA-1116) protein is UDP-N-acetylmuramate--L-alanine ligase.